Here is a 330-residue protein sequence, read N- to C-terminus: Beta-hexosaminidase (330 aa).

Substrate contacts are provided by residues Asp62, Arg70, Arg130, and 160–161 (KH). Residue His173 is the Proton donor/acceptor of the active site. The active-site Nucleophile is Asp242.

The protein belongs to the glycosyl hydrolase 3 family. NagZ subfamily.

It is found in the cytoplasm. The enzyme catalyses Hydrolysis of terminal non-reducing N-acetyl-D-hexosamine residues in N-acetyl-beta-D-hexosaminides.. It participates in cell wall biogenesis; peptidoglycan recycling. In terms of biological role, plays a role in peptidoglycan recycling by cleaving the terminal beta-1,4-linked N-acetylglucosamine (GlcNAc) from peptide-linked peptidoglycan fragments, giving rise to free GlcNAc, anhydro-N-acetylmuramic acid and anhydro-N-acetylmuramic acid-linked peptides. The chain is Beta-hexosaminidase from Vibrio cholerae serotype O1 (strain ATCC 39541 / Classical Ogawa 395 / O395).